A 630-amino-acid polypeptide reads, in one-letter code: Elongation factor 4 (630 aa).

Residues methionine 1–alanine 22 are disordered. Positions alanine 30–valine 211 constitute a tr-type G domain. GTP is bound by residues aspartate 42–threonine 47 and asparagine 158–aspartate 161.

It belongs to the TRAFAC class translation factor GTPase superfamily. Classic translation factor GTPase family. LepA subfamily.

It is found in the cell membrane. It catalyses the reaction GTP + H2O = GDP + phosphate + H(+). Required for accurate and efficient protein synthesis under certain stress conditions. May act as a fidelity factor of the translation reaction, by catalyzing a one-codon backward translocation of tRNAs on improperly translocated ribosomes. Back-translocation proceeds from a post-translocation (POST) complex to a pre-translocation (PRE) complex, thus giving elongation factor G a second chance to translocate the tRNAs correctly. Binds to ribosomes in a GTP-dependent manner. In Rhodococcus jostii (strain RHA1), this protein is Elongation factor 4.